We begin with the raw amino-acid sequence, 376 residues long: tRNA-specific 2-thiouridylase MnmA (376 aa).

ATP is bound by residues 17 to 24 and Met43; that span reads GMSGGVDS. The interval 103–105 is interaction with target base in tRNA; that stretch reads NPD. Cys108 (nucleophile) is an active-site residue. Cys108 and Cys205 are disulfide-bonded. Gly132 contacts ATP. The segment at 155 to 157 is interaction with tRNA; the sequence is KDQ. Catalysis depends on Cys205, which acts as the Cysteine persulfide intermediate. The interval 315–316 is interaction with tRNA; it reads RY.

It belongs to the MnmA/TRMU family.

The protein resides in the cytoplasm. The enzyme catalyses S-sulfanyl-L-cysteinyl-[protein] + uridine(34) in tRNA + AH2 + ATP = 2-thiouridine(34) in tRNA + L-cysteinyl-[protein] + A + AMP + diphosphate + H(+). Functionally, catalyzes the 2-thiolation of uridine at the wobble position (U34) of tRNA, leading to the formation of s(2)U34. The sequence is that of tRNA-specific 2-thiouridylase MnmA from Dichelobacter nodosus (strain VCS1703A).